Here is a 489-residue protein sequence, read N- to C-terminus: Glutamyl-tRNA(Gln) amidotransferase subunit A (489 aa).

Catalysis depends on charge relay system residues lysine 78 and serine 153. Catalysis depends on serine 177, which acts as the Acyl-ester intermediate.

The protein belongs to the amidase family. GatA subfamily. As to quaternary structure, heterotrimer of A, B and C subunits.

The catalysed reaction is L-glutamyl-tRNA(Gln) + L-glutamine + ATP + H2O = L-glutaminyl-tRNA(Gln) + L-glutamate + ADP + phosphate + H(+). Allows the formation of correctly charged Gln-tRNA(Gln) through the transamidation of misacylated Glu-tRNA(Gln) in organisms which lack glutaminyl-tRNA synthetase. The reaction takes place in the presence of glutamine and ATP through an activated gamma-phospho-Glu-tRNA(Gln). The sequence is that of Glutamyl-tRNA(Gln) amidotransferase subunit A from Nitratidesulfovibrio vulgaris (strain DP4) (Desulfovibrio vulgaris).